We begin with the raw amino-acid sequence, 243 residues long: Ribosomal RNA small subunit methyltransferase G (243 aa).

S-adenosyl-L-methionine-binding positions include G79, F84, 130–131, and R150; that span reads AE. The interval 222-243 is disordered; it reads KPTPNKYPRKPGIPNKQPLGGA.

Belongs to the methyltransferase superfamily. RNA methyltransferase RsmG family.

It is found in the cytoplasm. Functionally, specifically methylates the N7 position of a guanine in 16S rRNA. In Lacticaseibacillus paracasei (strain ATCC 334 / BCRC 17002 / CCUG 31169 / CIP 107868 / KCTC 3260 / NRRL B-441) (Lactobacillus paracasei), this protein is Ribosomal RNA small subunit methyltransferase G.